Consider the following 112-residue polypeptide: Cytoplasmic envelopment protein 3 (112 aa).

Gly2 is lipidated: N-myristoyl glycine; by host. Residues 84 to 112 (GANKGGGKRTSSLKSAKNGAGVKKKVRAL) are disordered.

This sequence belongs to the herpesviridae cytoplasmic envelopment protein 3 family. As to quaternary structure, interacts with cytoplasmic envelopment protein 2; this interaction is essential for the proper localization of each protein to the assembly complex and thus for the production of infectious virus. Myristoylation and palmitoylation (probably on one or more of the nearby cysteines at the N-terminus) enable membrane-binding and Golgi apparatus-specific targeting and are essential for efficient packaging. In terms of processing, phosphorylated. Phosphorylation does not seem to be required for recycling to the host Golgi apparatus. Packaging is selective for underphosphorylated forms.

The protein resides in the virion tegument. It localises to the virion membrane. Its subcellular location is the host cell membrane. It is found in the host Golgi apparatus membrane. In terms of biological role, plays an important role in the cytoplasmic envelopment of tegument proteins and capsids during the assembly and egress processes. Also participates in viral entry at the fusion step probably by regulating the core fusion machinery. This chain is Cytoplasmic envelopment protein 3 (UL99), found in Murid herpesvirus 1 (strain K181) (MuHV-1).